Reading from the N-terminus, the 295-residue chain is UDP-N-acetylenolpyruvoylglucosamine reductase (295 aa).

The FAD-binding PCMH-type domain occupies 23 to 188 (KVGGPADFLA…ISAKFALKPG (166 aa)). Residue R167 is part of the active site. S217 acts as the Proton donor in catalysis. E287 is an active-site residue.

Belongs to the MurB family. FAD is required as a cofactor.

The protein localises to the cytoplasm. The catalysed reaction is UDP-N-acetyl-alpha-D-muramate + NADP(+) = UDP-N-acetyl-3-O-(1-carboxyvinyl)-alpha-D-glucosamine + NADPH + H(+). Its pathway is cell wall biogenesis; peptidoglycan biosynthesis. Cell wall formation. This chain is UDP-N-acetylenolpyruvoylglucosamine reductase, found in Streptococcus pyogenes serotype M18 (strain MGAS8232).